A 788-amino-acid polypeptide reads, in one-letter code: Xylulose-5-phosphate phosphoketolase (788 aa).

The protein belongs to the XFP family. As to quaternary structure, homohexamer. Thiamine diphosphate serves as cofactor.

It carries out the reaction D-xylulose 5-phosphate + phosphate = acetyl phosphate + D-glyceraldehyde 3-phosphate + H2O. This is Xylulose-5-phosphate phosphoketolase (xpkA) from Lactiplantibacillus pentosus (Lactobacillus pentosus).